Consider the following 734-residue polypeptide: Photosystem I P700 chlorophyll a apoprotein A2 (734 aa).

8 helical membrane-spanning segments follow: residues 46-69 (IFASHFGQLAIIFLWTSGNLFHVA), 135-158 (LYNGALFLLFISAISLIAGWLHLQ), 175-199 (LNHHLSGLFGVSSLAWTGHLVHVAI), 273-291 (IAHHHLAIAFIFLIAGHMY), 330-353 (IHFQLGLALASLGVITSLVAQHMY), 369-395 (AALYTHHQYIAGFIMTGAFAHGAIFFI), 417-439 (AIISHLSWASLFLGFHTLGLYVH), and 517-535 (FLVHHAIALGLHTTTLILV). 2 residues coordinate [4Fe-4S] cluster: cysteine 559 and cysteine 568. Transmembrane regions (helical) follow at residues 575 to 596 (AFYLAVFWMLNTIGWVTFYWHW) and 643 to 665 (LSVWAWMFLFGHLVWATGFMFLI). Positions 654, 662, and 670 each coordinate chlorophyll a. Tryptophan 671 is a phylloquinone binding site. A helical membrane pass occupies residues 707–727 (LVGLAHFSVGYIFTYAAFLIA).

It belongs to the PsaA/PsaB family. The PsaA/B heterodimer binds the P700 chlorophyll special pair and subsequent electron acceptors. PSI consists of a core antenna complex that captures photons, and an electron transfer chain that converts photonic excitation into a charge separation. The eukaryotic PSI reaction center is composed of at least 11 subunits. P700 is a chlorophyll a/chlorophyll a' dimer, A0 is one or more chlorophyll a, A1 is one or both phylloquinones and FX is a shared 4Fe-4S iron-sulfur center. is required as a cofactor.

It is found in the plastid. The protein resides in the chloroplast thylakoid membrane. The catalysed reaction is reduced [plastocyanin] + hnu + oxidized [2Fe-2S]-[ferredoxin] = oxidized [plastocyanin] + reduced [2Fe-2S]-[ferredoxin]. Functionally, psaA and PsaB bind P700, the primary electron donor of photosystem I (PSI), as well as the electron acceptors A0, A1 and FX. PSI is a plastocyanin-ferredoxin oxidoreductase, converting photonic excitation into a charge separation, which transfers an electron from the donor P700 chlorophyll pair to the spectroscopically characterized acceptors A0, A1, FX, FA and FB in turn. Oxidized P700 is reduced on the lumenal side of the thylakoid membrane by plastocyanin. This Morus indica (Mulberry) protein is Photosystem I P700 chlorophyll a apoprotein A2.